The following is a 155-amino-acid chain: Small ribosomal subunit protein uS7c (155 aa).

The protein belongs to the universal ribosomal protein uS7 family. In terms of assembly, part of the 30S ribosomal subunit.

It localises to the plastid. The protein resides in the chloroplast. In terms of biological role, one of the primary rRNA binding proteins, it binds directly to 16S rRNA where it nucleates assembly of the head domain of the 30S subunit. The protein is Small ribosomal subunit protein uS7c (rps7) of Physcomitrium patens (Spreading-leaved earth moss).